The chain runs to 159 residues: Protein Smg homolog (159 aa).

This sequence belongs to the Smg family.

This is Protein Smg homolog from Shewanella amazonensis (strain ATCC BAA-1098 / SB2B).